Reading from the N-terminus, the 376-residue chain is Putative cytosolic 5'-nucleotidase 3 (376 aa).

D119 functions as the Nucleophile in the catalytic mechanism. The Mg(2+) site is built by D119 and D121. D121 (proton donor) is an active-site residue. Substrate-binding positions include E168, S189, 236–237 (SA), and K286. Position 312 (D312) interacts with Mg(2+).

Belongs to the pyrimidine 5'-nucleotidase family.

The protein localises to the cytoplasm. The enzyme catalyses a ribonucleoside 5'-phosphate + H2O = a ribonucleoside + phosphate. This is Putative cytosolic 5'-nucleotidase 3 from Caenorhabditis elegans.